The following is a 1392-amino-acid chain: Condensin complex subunit 1 (1392 aa).

The segment at 1–593 (MSPHNFEFHL…TGSKDSPSVP (593 aa)) is interaction with SMC2 and SMC4. A phosphoserine mark is found at serine 20 and serine 575. Disordered regions lie at residues 569 to 602 (EAST…QSND), 945 to 966 (REEQ…ETTM), and 1293 to 1392 (FETG…RHRS). Over residues 945 to 960 (REEQEHRAKEPKEKTA) the composition is skewed to basic and acidic residues. Phosphoserine occurs at positions 1300, 1305, 1320, and 1323. Phosphothreonine is present on threonine 1329. A Bipartite nuclear localization signal motif is present at residues 1332–1353 (PRRTKPGRPQTQQRKKSQRKAK). Over residues 1344 to 1353 (QRKKSQRKAK) the composition is skewed to basic residues. Phosphoserine is present on residues serine 1358, serine 1361, serine 1362, and serine 1367. Residues 1360–1373 (ESSEDELSAEMTEE) are compositionally biased toward acidic residues. Phosphothreonine; by CDK1 occurs at positions 1375 and 1380. Serine 1386 is subject to Phosphoserine.

It belongs to the CND1 (condensin subunit 1) family. In terms of assembly, component of the condensin complex, which contains the SMC2 and SMC4 heterodimer, and three non SMC subunits that probably regulate the complex: NCAPH/BRRN1, NCAPD2/CAPD2 and NCAPG. Interacts with histones H1 and H3. In terms of processing, phosphorylated by CDK1. Its phosphorylation, as well as that of NCAPH and NCAPG subunits, activates the condensin complex and is required for chromosome condensation.

The protein localises to the nucleus. It is found in the cytoplasm. Its subcellular location is the chromosome. In terms of biological role, regulatory subunit of the condensin complex, a complex required for conversion of interphase chromatin into mitotic-like condense chromosomes. The condensin complex probably introduces positive supercoils into relaxed DNA in the presence of type I topoisomerases and converts nicked DNA into positive knotted forms in the presence of type II topoisomerases. May target the condensin complex to DNA via its C-terminal domain. May promote the resolution of double-strand DNA catenanes (intertwines) between sister chromatids. Condensin-mediated compaction likely increases tension in catenated sister chromatids, providing directionality for type II topoisomerase-mediated strand exchanges toward chromatid decatenation. Required for decatenation of non-centromeric ultrafine DNA bridges during anaphase. Early in neurogenesis, may play an essential role to ensure accurate mitotic chromosome condensation in neuron stem cells, ultimately affecting neuron pool and cortex size. This chain is Condensin complex subunit 1 (Ncapd2), found in Mus musculus (Mouse).